A 339-amino-acid chain; its full sequence is Dihydroorotate dehydrogenase (quinone) (339 aa).

Residues 62-66 and Thr-86 contribute to the FMN site; that span reads AGMDK. Lys-66 is a substrate binding site. Position 111–115 (111–115) interacts with substrate; the sequence is NRMGF. FMN-binding residues include Asn-139 and Asn-172. Asn-172 serves as a coordination point for substrate. Residue Ser-175 is the Nucleophile of the active site. A substrate-binding site is contributed by Asn-177. Residues Lys-217 and Thr-245 each contribute to the FMN site. 246 to 247 contributes to the substrate binding site; it reads NT. FMN is bound by residues Gly-268, Gly-297, and 318-319; that span reads YS.

Belongs to the dihydroorotate dehydrogenase family. Type 2 subfamily. Monomer. FMN is required as a cofactor.

It localises to the cell membrane. The enzyme catalyses (S)-dihydroorotate + a quinone = orotate + a quinol. It functions in the pathway pyrimidine metabolism; UMP biosynthesis via de novo pathway; orotate from (S)-dihydroorotate (quinone route): step 1/1. Catalyzes the conversion of dihydroorotate to orotate with quinone as electron acceptor. In Shewanella piezotolerans (strain WP3 / JCM 13877), this protein is Dihydroorotate dehydrogenase (quinone).